The primary structure comprises 153 residues: Small ribosomal subunit protein bS16 (153 aa).

The span at 121 to 131 (AEAAAKAKAEA) shows a compositional bias: basic and acidic residues. The tract at residues 121–153 (AEAAAKAKAEAEAAAAAEEAPAEEAAEEAPAED) is disordered. The segment covering 140–153 (APAEEAAEEAPAED) has biased composition (acidic residues).

Belongs to the bacterial ribosomal protein bS16 family.

The sequence is that of Small ribosomal subunit protein bS16 from Bifidobacterium longum (strain DJO10A).